The primary structure comprises 152 residues: Deoxyuridine 5'-triphosphate nucleotidohydrolase (152 aa).

Substrate-binding positions include 72–74 (RSG), Asn-85, and 89–91 (TID).

This sequence belongs to the dUTPase family. It depends on Mg(2+) as a cofactor.

It carries out the reaction dUTP + H2O = dUMP + diphosphate + H(+). It functions in the pathway pyrimidine metabolism; dUMP biosynthesis; dUMP from dCTP (dUTP route): step 2/2. Its function is as follows. This enzyme is involved in nucleotide metabolism: it produces dUMP, the immediate precursor of thymidine nucleotides and it decreases the intracellular concentration of dUTP so that uracil cannot be incorporated into DNA. In Rhodopseudomonas palustris (strain HaA2), this protein is Deoxyuridine 5'-triphosphate nucleotidohydrolase.